A 63-amino-acid polypeptide reads, in one-letter code: DNA-directed RNA polymerase 7 kDa subunit (63 aa).

This sequence belongs to the poxviridae DNA-directed RNA polymerase 7 kDa subunit family. In terms of assembly, the DNA-dependent RNA polymerase used for intermediate and late genes expression consists of eight subunits 147 kDa, 133 kDa, 35 kDa, 30 kDa, 22 kDa, 19 kDa, 18 kDa and 7 kDa totalling more than 500 kDa in mass. The same holoenzyme, with the addition of the transcription-specificity factor RAP94, is used for early gene expression.

The protein resides in the virion. The catalysed reaction is RNA(n) + a ribonucleoside 5'-triphosphate = RNA(n+1) + diphosphate. Functionally, part of the DNA-dependent RNA polymerase which catalyzes the transcription of viral DNA into RNA using the four ribonucleoside triphosphates as substrates. Responsible for the transcription of early, intermediate and late genes. DNA-dependent RNA polymerase associates with the early transcription factor (ETF) thereby allowing the early genes transcription. Late transcription, and probably also intermediate transcription, require newly synthesized RNA polymerase. This chain is DNA-directed RNA polymerase 7 kDa subunit (RPO7), found in Myxoma virus (strain Lausanne) (MYXV).